The primary structure comprises 249 residues: UPF0246 protein Lreu_0493 (249 aa).

This sequence belongs to the UPF0246 family.

The chain is UPF0246 protein Lreu_0493 from Limosilactobacillus reuteri (strain DSM 20016) (Lactobacillus reuteri).